Reading from the N-terminus, the 353-residue chain is MTAILERRESESLWGRFCNWITSSENRLYIGWFGVLMIPTLLTATSVFIIAFIAAPPVDIDGIREPVSGSLLYGNNIISGAIIPTSAAIGLHFYPIWEAASVDEWLYNGGPYELIVLHFLLGVACYMGREWELSFRLGMRPWIAVAYSAPVAAATAVFLIYPIGQGSFSDGMPLGISGTFNFMIVFQAEHNILMHPFHMLGVAGVFGGSLFSAMHGSLVTSSLIRETTENESANEGYRFGQEEETYNIVAAHGYFGRLIFQYASFNNSRSLHFFLAAWPVVGIWFTALGISTMAFNLNGFNFNQSVVDSQGRVINTWADIINRANLGMEVMHERNAHNFPLDLAAIEAPSTNG.

Threonine 2 is modified (N-acetylthreonine). Threonine 2 is subject to Phosphothreonine. 3 helical membrane passes run 29-46, 118-133, and 142-156; these read YIGW…TATS, HFLL…EWEL, and WIAV…AATA. Histidine 118 contacts chlorophyll a. Residue tyrosine 126 participates in pheophytin a binding. The [CaMn4O5] cluster site is built by aspartate 170 and glutamate 189. The chain crosses the membrane as a helical span at residues 197–218; the sequence is FHMLGVAGVFGGSLFSAMHGSL. Histidine 198 serves as a coordination point for chlorophyll a. A quinone-binding positions include histidine 215 and 264–265; that span reads SF. Histidine 215 is a Fe cation binding site. Histidine 272 provides a ligand contact to Fe cation. The helical transmembrane segment at 274-288 threads the bilayer; sequence FLAAWPVVGIWFTAL. [CaMn4O5] cluster contacts are provided by histidine 332, glutamate 333, aspartate 342, and alanine 344. The propeptide occupies 345–353; sequence AIEAPSTNG.

The protein belongs to the reaction center PufL/M/PsbA/D family. As to quaternary structure, PSII is composed of 1 copy each of membrane proteins PsbA, PsbB, PsbC, PsbD, PsbE, PsbF, PsbH, PsbI, PsbJ, PsbK, PsbL, PsbM, PsbT, PsbX, PsbY, PsbZ, Psb30/Ycf12, at least 3 peripheral proteins of the oxygen-evolving complex and a large number of cofactors. It forms dimeric complexes. The D1/D2 heterodimer binds P680, chlorophylls that are the primary electron donor of PSII, and subsequent electron acceptors. It shares a non-heme iron and each subunit binds pheophytin, quinone, additional chlorophylls, carotenoids and lipids. D1 provides most of the ligands for the Mn4-Ca-O5 cluster of the oxygen-evolving complex (OEC). There is also a Cl(-1) ion associated with D1 and D2, which is required for oxygen evolution. The PSII complex binds additional chlorophylls, carotenoids and specific lipids. serves as cofactor. In terms of processing, tyr-161 forms a radical intermediate that is referred to as redox-active TyrZ, YZ or Y-Z. C-terminally processed by CTPA; processing is essential to allow assembly of the oxygen-evolving complex and thus photosynthetic growth.

It localises to the plastid. The protein localises to the chloroplast thylakoid membrane. The catalysed reaction is 2 a plastoquinone + 4 hnu + 2 H2O = 2 a plastoquinol + O2. Photosystem II (PSII) is a light-driven water:plastoquinone oxidoreductase that uses light energy to abstract electrons from H(2)O, generating O(2) and a proton gradient subsequently used for ATP formation. It consists of a core antenna complex that captures photons, and an electron transfer chain that converts photonic excitation into a charge separation. The D1/D2 (PsbA/PsbD) reaction center heterodimer binds P680, the primary electron donor of PSII as well as several subsequent electron acceptors. This Petunia hybrida (Petunia) protein is Photosystem II protein D1.